Here is a 579-residue protein sequence, read N- to C-terminus: Adenine deaminase (579 aa).

This sequence belongs to the metallo-dependent hydrolases superfamily. Adenine deaminase family. Mn(2+) is required as a cofactor.

It catalyses the reaction adenine + H2O + H(+) = hypoxanthine + NH4(+). The sequence is that of Adenine deaminase from Listeria monocytogenes serotype 4b (strain F2365).